Reading from the N-terminus, the 546-residue chain is MTMAALDVFNVPYSVPLLGSTVVILIGFIAIKALRVGSRPKGLPPGPPTEFIWGNTKQIDLFYPQYQYRKWAQQYGPVYTVMLGDTAHVVVSGLRDVRDIFIKQGASSQNRPPSRFQLLMRDGFFPGLNNGEKWRQSRRMWQAVLNNSAAKQYLPYQELETRQLLFDLLRAPTEWRDHIERYSNSVAMTMVNGRRIIDAADPRVKETIQDLYDLAETGVRGAFLDSWPFLWKLPEWMFPVCRQARKIAAKHREYIWRNYSDVAKRTSQGEVLPSVNHAIQEKLKQGWPGVSEIEGAEIGHHLLTGTTDTTASTLINWVAAMCLHPEAQKKAQEEIDRVVGPNRLPTDADAANLPYVQQVIQEAQRWITAVPLSLPRAANAPVHWGKYTIPEETGLIMNSHALHNDPDIFPEPDKFKPERWEGKPNASSNGDAQLLFTFGAGRRVCPGQHLAERSLFLVISHWLWGFDTLQATDDDKNKIPIDKDDLRPGFIVCLNPFPAKITPRTAQHRELIERIWKEELEVSLDESQQWKATPEGIARLLERVGK.

The helical transmembrane segment at 11–31 threads the bilayer; sequence VPYSVPLLGSTVVILIGFIAI. Residues N146, N258, and N425 are each glycosylated (N-linked (GlcNAc...) asparagine). C445 lines the heme pocket.

The protein belongs to the cytochrome P450 family. Requires heme as cofactor.

It localises to the membrane. It functions in the pathway polyketide biosynthesis. Cytochrome P450 monooxygenase; part of the gene cluster that mediates the biosynthesis of asperlin, a polyketide showing anti-inflammatory, antitumor and antibiotic activities. The first step of the asperlin biosynthesis is the production of the intermediate 2,4,6-octatrienoic acid by the highly redusing polyketide synthase alnA with cleavage of the PKS product by the esterase alnB. 2,4,6-octatrienoic acid is further converted to asperlin via several steps involving the remaining enzymes from the cluster. The chain is Cytochrome P450 monooxygenase alnH from Emericella nidulans (strain FGSC A4 / ATCC 38163 / CBS 112.46 / NRRL 194 / M139) (Aspergillus nidulans).